The following is a 221-amino-acid chain: HTH-type transcriptional regulator McbR (221 aa).

Residues 10 to 77 (VSLTLQVEND…PAQAFTVPEV (68 aa)) enclose the HTH gntR-type domain. Residues 37 to 56 (TKNLAEQLGMSITPVREALL) constitute a DNA-binding region (H-T-H motif).

Important for biofilm formation. Represses expression of McbA by binding to its promoter region, which prevents colanic acid overproduction and mucoidy. The protein is HTH-type transcriptional regulator McbR (mcbR) of Escherichia coli (strain K12).